Reading from the N-terminus, the 123-residue chain is Small ribosomal subunit protein uS12 (123 aa).

The disordered stretch occupies residues 1–31 (MPTIQQLVRKGRHSKKAKVATAGLKGSPQRR). Over residues 9 to 18 (RKGRHSKKAK) the composition is skewed to basic residues. Asp89 is modified (3-methylthioaspartic acid).

It belongs to the universal ribosomal protein uS12 family. Part of the 30S ribosomal subunit. Contacts proteins S8 and S17. May interact with IF1 in the 30S initiation complex.

In terms of biological role, with S4 and S5 plays an important role in translational accuracy. Functionally, interacts with and stabilizes bases of the 16S rRNA that are involved in tRNA selection in the A site and with the mRNA backbone. Located at the interface of the 30S and 50S subunits, it traverses the body of the 30S subunit contacting proteins on the other side and probably holding the rRNA structure together. The combined cluster of proteins S8, S12 and S17 appears to hold together the shoulder and platform of the 30S subunit. This is Small ribosomal subunit protein uS12 from Corynebacterium aurimucosum (strain ATCC 700975 / DSM 44827 / CIP 107346 / CN-1) (Corynebacterium nigricans).